A 354-amino-acid polypeptide reads, in one-letter code: MSHSHPVRRILSPKDLEIFGASDTKKQVFGFVKVLNYYVVGKGNSYETLKHPIIGKLVAILDKVIDLVAKYPPEDATSSRFGKPEFRDFHQALEENAKDWISDLGELEDWQLVELCTYFAASFGDRTRIDFGSGHELNFICFLFCLRQLGLLDTDSSAAVLTVFVQYLKTMRAVQASYWLEPAGSHGVWGLDDYHFLPFMFGSAQLACHKYLRPLSIHDMEMLDMWKHEYLYMGCIHFINSVKTTASLRWHSPMLDDISGVKTWAKVNQGMVKMYDAEVLSKLPILQHFMFGQLIKAPEGVSPPPDPNAEVQHIHNHWADCCGIKVPSAIAASEMSQKPGDLRKLRGSGVLPFD.

It belongs to the PTPA-type PPIase family.

The protein localises to the cytoplasm. It catalyses the reaction [protein]-peptidylproline (omega=180) = [protein]-peptidylproline (omega=0). Its function is as follows. PPIases accelerate the folding of proteins. It catalyzes the cis-trans isomerization of proline imidic peptide bonds in oligopeptides. Acts as a regulatory subunit for PP2A-like phosphatases modulating their activity or substrate specificity, probably by inducing a conformational change in the catalytic subunit, a direct target of the PPIase. Can reactivate inactive phosphatase PP2A-phosphatase methylesterase complexes (PP2Ai) in presence of ATP and Mg(2+) by dissociating the inactive form from the complex. In Yarrowia lipolytica (strain CLIB 122 / E 150) (Yeast), this protein is Serine/threonine-protein phosphatase 2A activator 2 (RRD2).